Reading from the N-terminus, the 376-residue chain is Succinate--CoA ligase [ADP-forming] subunit beta (376 aa).

The region spanning 9 to 237 (KEIFSKYGIP…PTEEEKVEAD (229 aa)) is the ATP-grasp domain. ATP contacts are provided by residues Lys46, 53 to 55 (GRG), Val95, and Glu100. Mg(2+) is bound by residues Asn192 and Asp206. Substrate is bound by residues Asn257 and 314 to 316 (GIT).

The protein belongs to the succinate/malate CoA ligase beta subunit family. In terms of assembly, heterotetramer of two alpha and two beta subunits. The cofactor is Mg(2+).

It carries out the reaction succinate + ATP + CoA = succinyl-CoA + ADP + phosphate. It catalyses the reaction GTP + succinate + CoA = succinyl-CoA + GDP + phosphate. Its pathway is carbohydrate metabolism; tricarboxylic acid cycle; succinate from succinyl-CoA (ligase route): step 1/1. Functionally, succinyl-CoA synthetase functions in the citric acid cycle (TCA), coupling the hydrolysis of succinyl-CoA to the synthesis of either ATP or GTP and thus represents the only step of substrate-level phosphorylation in the TCA. The beta subunit provides nucleotide specificity of the enzyme and binds the substrate succinate, while the binding sites for coenzyme A and phosphate are found in the alpha subunit. The sequence is that of Succinate--CoA ligase [ADP-forming] subunit beta from Bacteroides thetaiotaomicron (strain ATCC 29148 / DSM 2079 / JCM 5827 / CCUG 10774 / NCTC 10582 / VPI-5482 / E50).